A 79-amino-acid chain; its full sequence is Small ribosomal subunit protein uS17 (79 aa).

The protein belongs to the universal ribosomal protein uS17 family. As to quaternary structure, part of the 30S ribosomal subunit.

Its function is as follows. One of the primary rRNA binding proteins, it binds specifically to the 5'-end of 16S ribosomal RNA. This is Small ribosomal subunit protein uS17 from Rhizobium etli (strain ATCC 51251 / DSM 11541 / JCM 21823 / NBRC 15573 / CFN 42).